Reading from the N-terminus, the 132-residue chain is Holo-[acyl-carrier-protein] synthase (132 aa).

Positions 8 and 64 each coordinate Mg(2+).

This sequence belongs to the P-Pant transferase superfamily. AcpS family. Requires Mg(2+) as cofactor.

It is found in the cytoplasm. The catalysed reaction is apo-[ACP] + CoA = holo-[ACP] + adenosine 3',5'-bisphosphate + H(+). Transfers the 4'-phosphopantetheine moiety from coenzyme A to a Ser of acyl-carrier-protein. This chain is Holo-[acyl-carrier-protein] synthase, found in Shewanella woodyi (strain ATCC 51908 / MS32).